Reading from the N-terminus, the 89-residue chain is DNA-directed RNA polymerase subunit omega (89 aa).

Belongs to the RNA polymerase subunit omega family. As to quaternary structure, the RNAP catalytic core consists of 2 alpha, 1 beta, 1 beta' and 1 omega subunit. When a sigma factor is associated with the core the holoenzyme is formed, which can initiate transcription.

The catalysed reaction is RNA(n) + a ribonucleoside 5'-triphosphate = RNA(n+1) + diphosphate. Promotes RNA polymerase assembly. Latches the N- and C-terminal regions of the beta' subunit thereby facilitating its interaction with the beta and alpha subunits. The protein is DNA-directed RNA polymerase subunit omega of Idiomarina loihiensis (strain ATCC BAA-735 / DSM 15497 / L2-TR).